A 124-amino-acid polypeptide reads, in one-letter code: Superoxide reductase (124 aa).

Positions 14, 16, 41, 47, 111, and 114 each coordinate Fe cation.

The protein belongs to the desulfoferrodoxin family. Homotetramer. Fe cation is required as a cofactor.

The enzyme catalyses reduced [rubredoxin] + superoxide + 2 H(+) = oxidized [rubredoxin] + H2O2. Functionally, uses electrons from reduced NADP, by way of rubredoxin and an oxidoreductase, to catalyze the reduction of superoxide to hydrogen peroxide. The protein is Superoxide reductase (sorA) of Pyrococcus furiosus (strain ATCC 43587 / DSM 3638 / JCM 8422 / Vc1).